We begin with the raw amino-acid sequence, 239 residues long: MPAQEGPPPYCFSTPLRRGVLRSRYRRFFAEVELENGQPVTAHCPNTGPMTGVCQVGAPVYLSYHPDPKRKLAYTWEMIQVEGVWVGINTGLPNRLVEWGLARGWFPQLAEFSRWQREVTCGRSKIDFLLMGDSGLAYLEVKNTTWAVGSRALFPDTVTTRGQKHLEDLIEIRRQGQRALLLYWINRADCTEFAPGEERDPRYAHLFRQALQAGVEVLPYRIAVSPQGIRPLGLAKIVA.

The protein belongs to the SfsA family.

The protein is Sugar fermentation stimulation protein homolog of Synechococcus sp. (strain JA-3-3Ab) (Cyanobacteria bacterium Yellowstone A-Prime).